The primary structure comprises 631 residues: tRNA uridine 5-carboxymethylaminomethyl modification enzyme MnmG (631 aa).

FAD contacts are provided by residues 15–20 (GGGHAG), Val-127, and Ser-182. 275–289 (GPRYCPSIEDKIVRF) serves as a coordination point for NAD(+). An FAD-binding site is contributed by Gln-372.

This sequence belongs to the MnmG family. As to quaternary structure, homodimer. Heterotetramer of two MnmE and two MnmG subunits. It depends on FAD as a cofactor.

The protein localises to the cytoplasm. In terms of biological role, NAD-binding protein involved in the addition of a carboxymethylaminomethyl (cmnm) group at the wobble position (U34) of certain tRNAs, forming tRNA-cmnm(5)s(2)U34. The sequence is that of tRNA uridine 5-carboxymethylaminomethyl modification enzyme MnmG from Buchnera aphidicola subsp. Schizaphis graminum (strain Sg).